We begin with the raw amino-acid sequence, 468 residues long: Glutamate--tRNA ligase (468 aa).

Residues 11-21 carry the 'HIGH' region motif; the sequence is PSPTGFIHLGN. A 'KMSKS' region motif is present at residues 243–247; sequence KMSKR. Residue K246 participates in ATP binding.

Belongs to the class-I aminoacyl-tRNA synthetase family. Glutamate--tRNA ligase type 1 subfamily. As to quaternary structure, monomer.

It is found in the cytoplasm. The catalysed reaction is tRNA(Glu) + L-glutamate + ATP = L-glutamyl-tRNA(Glu) + AMP + diphosphate. Catalyzes the attachment of glutamate to tRNA(Glu) in a two-step reaction: glutamate is first activated by ATP to form Glu-AMP and then transferred to the acceptor end of tRNA(Glu). In Cupriavidus pinatubonensis (strain JMP 134 / LMG 1197) (Cupriavidus necator (strain JMP 134)), this protein is Glutamate--tRNA ligase.